The following is an 884-amino-acid chain: Putative GTP diphosphokinase RSH1, chloroplastic (884 aa).

The transit peptide at 1 to 55 (MTSASSMSVSVECVNICNLTKGDGNARSDCSALSCAWKAPRALTGFLASTAHPPV) directs the protein to the chloroplast. The HD domain maps to 172–279 (FIIHPVAVAR…VKLADRLHNM (108 aa)). Residues 563–626 (LGSRVFVFTP…ENAEVVEIVT (64 aa)) enclose the TGS domain. Residues 711 to 727 (QSQDKSRDTTPAPQNGS) show a composition bias toward polar residues. The interval 711 to 747 (QSQDKSRDTTPAPQNGSVWAPKVNGKHNKAIKNSSSD) is disordered. Residues 797–868 (WLCVVSMDRK…LVLGVLGWSS (72 aa)) enclose the ACT domain.

Belongs to the RelA/SpoT family. In terms of assembly, interacts with RPP4. Interacts with RPP5. In terms of tissue distribution, expressed in hypocotyls, shoots, cotyledons, rosette leaves, sepals and pistils.

The protein resides in the plastid. Its subcellular location is the chloroplast. It catalyses the reaction GTP + ATP = guanosine 3'-diphosphate 5'-triphosphate + AMP. Functionally, may be involved in a rapid plant ppGpp (guanosine 3'-diphosphate 5'-diphosphate)-mediated response to pathogens and other stresses. Unable to functionally complement E.coli relA mutants. This is Putative GTP diphosphokinase RSH1, chloroplastic (RSH1) from Arabidopsis thaliana (Mouse-ear cress).